A 776-amino-acid polypeptide reads, in one-letter code: Serine/threonine-protein kinase-like protein CCR2 (776 aa).

The signal sequence occupies residues 1-22 (MQPNSHIFVIITISSLIITVSA). Residues 23–432 (YGSTGTIAAA…QKEQREVRRL (410 aa)) are Extracellular-facing. 8 N-linked (GlcNAc...) asparagine glycosylation sites follow: asparagine 59, asparagine 92, asparagine 154, asparagine 162, asparagine 205, asparagine 278, asparagine 287, and asparagine 350. A TNFR-Cys repeat occupies 341–396 (NCGDGWFAFNASILKESELTSLCSFHNLNICLRCGISCLEGYFPSSTCNPNADRVC). 3 disulfides stabilise this stretch: cysteine 342/cysteine 371, cysteine 374/cysteine 388, and cysteine 378/cysteine 396. An N-linked (GlcNAc...) asparagine glycan is attached at asparagine 404. A helical membrane pass occupies residues 433 to 453 (VIIIGCSVLGFLVMLIGLSFI). Residues 454-776 (PKMTKGSKRD…DLIVKSGLTF (323 aa)) are Cytoplasmic-facing. Positions 519–776 (FKEFNELGRG…DLIVKSGLTF (258 aa)) constitute a Protein kinase domain. ATP is bound by residues 525–533 (LGRGSFGFV) and lysine 547. Residue aspartate 644 is the Proton acceptor of the active site.

It belongs to the protein kinase superfamily. Ser/Thr protein kinase family. Homodimer. In terms of tissue distribution, expressed in roots, leaves, shoot apical meristems (SAM), and floral buds.

It localises to the membrane. The catalysed reaction is L-seryl-[protein] + ATP = O-phospho-L-seryl-[protein] + ADP + H(+). The enzyme catalyses L-threonyl-[protein] + ATP = O-phospho-L-threonyl-[protein] + ADP + H(+). Its function is as follows. Serine/threonine-protein kinase with low activity. The protein is Serine/threonine-protein kinase-like protein CCR2 (CCR2) of Arabidopsis thaliana (Mouse-ear cress).